The chain runs to 148 residues: Large ribosomal subunit protein bL9 (148 aa).

This sequence belongs to the bacterial ribosomal protein bL9 family.

In terms of biological role, binds to the 23S rRNA. This chain is Large ribosomal subunit protein bL9, found in Clostridium perfringens (strain ATCC 13124 / DSM 756 / JCM 1290 / NCIMB 6125 / NCTC 8237 / Type A).